The primary structure comprises 129 residues: Lysozyme C-2 (129 aa).

The C-type lysozyme domain occupies 1–129 (KVFERCELAR…VSSYVEGCTL (129 aa)). Disulfide bonds link Cys6-Cys127, Cys30-Cys115, Cys65-Cys81, and Cys77-Cys95. Catalysis depends on residues Glu35 and Asp53.

The protein belongs to the glycosyl hydrolase 22 family. Monomer.

The catalysed reaction is Hydrolysis of (1-&gt;4)-beta-linkages between N-acetylmuramic acid and N-acetyl-D-glucosamine residues in a peptidoglycan and between N-acetyl-D-glucosamine residues in chitodextrins.. Its function is as follows. Lysozymes have primarily a bacteriolytic function; those in tissues and body fluids are associated with the monocyte-macrophage system and enhance the activity of immunoagents. In Capra hircus (Goat), this protein is Lysozyme C-2.